The following is a 578-amino-acid chain: Peptidyl-prolyl cis-trans isomerase-like 2 (578 aa).

The 75-residue stretch at arginine 40–aspartate 114 folds into the U-box domain. Residues lysine 240 to glycine 260 form a disordered region. In terms of domain architecture, PPIase cyclophilin-type spans alanine 321–isoleucine 475. The disordered stretch occupies residues glycine 505–tryptophan 578. The span at lysine 538–valine 548 shows a compositional bias: polar residues. Residues alanine 551–glutamate 560 are compositionally biased toward acidic residues. The segment covering glycine 569–tryptophan 578 has biased composition (gly residues).

This sequence belongs to the cyclophilin-type PPIase family. PPIL2 subfamily.

The protein resides in the nucleus. It carries out the reaction [protein]-peptidylproline (omega=180) = [protein]-peptidylproline (omega=0). It catalyses the reaction S-ubiquitinyl-[E2 ubiquitin-conjugating enzyme]-L-cysteine + [acceptor protein]-L-lysine = [E2 ubiquitin-conjugating enzyme]-L-cysteine + N(6)-ubiquitinyl-[acceptor protein]-L-lysine.. It functions in the pathway protein modification; protein ubiquitination. Its function is as follows. May catalyze the cis-trans isomerization of proline imidic peptide bonds in oligopeptides thereby assisting the folding of proteins. May also function as a chaperone, playing a role in intracellular transport of proteins. May also have a protein ubiquitin ligase activity acting as an E3 ubiquitin protein ligase or as a ubiquitin-ubiquitin ligase promoting elongation of ubiquitin chains on proteins. The protein is Peptidyl-prolyl cis-trans isomerase-like 2 (CYP8) of Gibberella zeae (strain ATCC MYA-4620 / CBS 123657 / FGSC 9075 / NRRL 31084 / PH-1) (Wheat head blight fungus).